Here is a 650-residue protein sequence, read N- to C-terminus: Probable basic-leucine zipper transcription factor K (650 aa).

The stretch at 37–180 (IDNNNNNYSN…KQQKQQQQEQ (144 aa)) forms a coiled coil. 2 disordered regions span residues 109-130 (IPQQQQQEQDQQEDQDQEQEQE) and 242-279 (TTLNTNLQSDNNNNNNNNNNNNNNNNNNNNNNNNNNNL). Residues 118–129 (DQQEDQDQEQEQ) are compositionally biased toward acidic residues. The span at 242-251 (TTLNTNLQSD) shows a compositional bias: polar residues. Low complexity predominate over residues 252–278 (NNNNNNNNNNNNNNNNNNNNNNNNNNN). The stretch at 259–286 (NNNNNNNNNNNNNNNNNNNNLLNEKQIE) forms a coiled coil. In terms of domain architecture, bZIP spans 305–368 (FNKIEKGKRN…IEIMRSEPES (64 aa)). Residues 307–327 (KIEKGKRNQTESSKNFRERKK) form a basic motif region. The leucine-zipper stretch occupies residues 330–337 (IKDIELKL). Low complexity predominate over residues 452 to 466 (NNNNNNNNNNNNNNN). Residues 452-473 (NNNNNNNNNNNNNNNDNDDDNE) are disordered.

This sequence belongs to the bZIP family.

The protein resides in the nucleus. Functionally, probable transcriptional regulator. This is Probable basic-leucine zipper transcription factor K (bzpK) from Dictyostelium discoideum (Social amoeba).